The sequence spans 324 residues: VDQCTGLQGFLIFHSFGGGTGSGFTSLLMERLSVDYGKKSKLEFAIYPAPQVSTAVVEPYNSILTTHTTLEQSDCAFMVDNEAIYDICRRNLDIERPTYTNLNRLIGQIVSSITASLRFDGALNVDLTEFQTNLVPYPRIHFPLVTYSPIISAEKAYHEQLSVSEITNACFEPSNQMVKCDPRHGKYMACCMLYRGDVVPKDVNAAIAAIKTKRTIQFVDWCPTGFKVGINYQPPTVVPGGDLAKVQRAVCMLSNTTAIAEAWARLDHKFDLMYAKRAFVHWYVGEGMEEGEFSEAREDLAALEKDYEEVGTDSMDGEDEGEEY.

The GTP site is built by Ser-15, Gly-19, Thr-20, Thr-54, Asn-81, and Asn-103. Glu-129 is an active-site residue.

This sequence belongs to the tubulin family. Dimer of alpha and beta chains. A typical microtubule is a hollow water-filled tube with an outer diameter of 25 nm and an inner diameter of 15 nM. Alpha-beta heterodimers associate head-to-tail to form protofilaments running lengthwise along the microtubule wall with the beta-tubulin subunit facing the microtubule plus end conferring a structural polarity. Microtubules usually have 13 protofilaments but different protofilament numbers can be found in some organisms and specialized cells. Requires Mg(2+) as cofactor. Some glutamate residues at the C-terminus are polyglycylated, resulting in polyglycine chains on the gamma-carboxyl group. Glycylation is mainly limited to tubulin incorporated into axonemes (cilia and flagella) whereas glutamylation is prevalent in neuronal cells, centrioles, axonemes, and the mitotic spindle. Both modifications can coexist on the same protein on adjacent residues, and lowering polyglycylation levels increases polyglutamylation, and reciprocally. The precise function of polyglycylation is still unclear. Post-translationally, some glutamate residues at the C-terminus are polyglutamylated, resulting in polyglutamate chains on the gamma-carboxyl group. Polyglutamylation plays a key role in microtubule severing by spastin (SPAST). SPAST preferentially recognizes and acts on microtubules decorated with short polyglutamate tails: severing activity by SPAST increases as the number of glutamates per tubulin rises from one to eight, but decreases beyond this glutamylation threshold.

Its subcellular location is the cytoplasm. It is found in the cytoskeleton. The catalysed reaction is GTP + H2O = GDP + phosphate + H(+). Tubulin is the major constituent of microtubules, a cylinder consisting of laterally associated linear protofilaments composed of alpha- and beta-tubulin heterodimers. Microtubules grow by the addition of GTP-tubulin dimers to the microtubule end, where a stabilizing cap forms. Below the cap, tubulin dimers are in GDP-bound state, owing to GTPase activity of alpha-tubulin. This is Tubulin alpha-8 chain from Gallus gallus (Chicken).